Here is a 134-residue protein sequence, read N- to C-terminus: Small ribosomal subunit protein uS11 (134 aa).

2 disordered regions span residues 1 to 22 (MPPK…KNVA) and 114 to 134 (SIQD…RRRV). Basic residues predominate over residues 9–22 (AAKKVRRKEKKNVA).

The protein belongs to the universal ribosomal protein uS11 family. Part of the 30S ribosomal subunit. Interacts with proteins S7 and S18. Binds to IF-3.

Located on the platform of the 30S subunit, it bridges several disparate RNA helices of the 16S rRNA. Forms part of the Shine-Dalgarno cleft in the 70S ribosome. The polypeptide is Small ribosomal subunit protein uS11 (Streptomyces avermitilis (strain ATCC 31267 / DSM 46492 / JCM 5070 / NBRC 14893 / NCIMB 12804 / NRRL 8165 / MA-4680)).